We begin with the raw amino-acid sequence, 137 residues long: Protein MGF 110-7L (137 aa).

Residues 1 to 20 form the signal peptide; the sequence is MLVIILGIIGLLASSNLVSS. 3 N-linked (GlcNAc...) asparagine; by host glycosylation sites follow: asparagine 69, asparagine 70, and asparagine 105.

The protein belongs to the asfivirus MGF 110 family.

Its function is as follows. Plays a role in virus cell tropism, and may be required for efficient virus replication in macrophages. The sequence is that of Protein MGF 110-7L from African swine fever virus (isolate Tick/South Africa/Pretoriuskop Pr4/1996) (ASFV).